Here is a 349-residue protein sequence, read N- to C-terminus: Methylglutaconyl-CoA hydratase 1, mitochondrial (349 aa).

The N-terminal 37 residues, 1–37 (MPPVSRILSYAPRVAIRPSSQLARPARAFAVGTVRYY), are a transit peptide targeting the mitochondrion.

Belongs to the enoyl-CoA hydratase/isomerase family. In terms of assembly, homohexamer.

The protein localises to the mitochondrion. The enzyme catalyses (3S)-3-hydroxy-3-methylglutaryl-CoA = 3-methyl-(2E)-glutaconyl-CoA + H2O. Its pathway is amino-acid degradation; L-leucine degradation; (S)-3-hydroxy-3-methylglutaryl-CoA from 3-isovaleryl-CoA: step 3/3. Functionally, 3-methylglutaconyl-CoA hydratase that catalyzes the fifth step in the leucine degradation pathway, the reversible hydration of 3-methylglutaconyl-CoA (3-MG-CoA) to 3-hydroxy-3-methylglutaryl-CoA (HMG-CoA). Involved in vegetative growth, conidiation and in the stress response. Controls mitochondrial morphology and mitophagy, which are critical for the infectious growth of the pathogen. The sequence is that of Methylglutaconyl-CoA hydratase 1, mitochondrial from Pyricularia oryzae (strain 70-15 / ATCC MYA-4617 / FGSC 8958) (Rice blast fungus).